The sequence spans 109 residues: Nucleoid-associated protein Ssed_2851 (109 aa).

The protein belongs to the YbaB/EbfC family. In terms of assembly, homodimer.

The protein localises to the cytoplasm. Its subcellular location is the nucleoid. Binds to DNA and alters its conformation. May be involved in regulation of gene expression, nucleoid organization and DNA protection. This chain is Nucleoid-associated protein Ssed_2851, found in Shewanella sediminis (strain HAW-EB3).